We begin with the raw amino-acid sequence, 1054 residues long: Probable sucrose-phosphate synthase 1 (1054 aa).

Over residues 104–115 (RLERERGRREAV) the composition is skewed to basic and acidic residues. Disordered stretches follow at residues 104 to 125 (RLERERGRREAVADMSEDLSEG), 674 to 693 (LRNEEDDDENSESDSPSDSL), and 708 to 727 (DGDKNESREKGGGSHPDDRA).

This sequence belongs to the glycosyltransferase 1 family. As to quaternary structure, homodimer or homotetramer.

It catalyses the reaction beta-D-fructose 6-phosphate + UDP-alpha-D-glucose = sucrose 6(F)-phosphate + UDP + H(+). It functions in the pathway glycan biosynthesis; sucrose biosynthesis; sucrose from D-fructose 6-phosphate and UDP-alpha-D-glucose: step 1/2. With respect to regulation, activity is regulated by phosphorylation and moderated by concentration of metabolites and light. Its function is as follows. Plays a role in photosynthetic sucrose synthesis by catalyzing the rate-limiting step of sucrose biosynthesis from UDP-glucose and fructose- 6-phosphate. Involved in the regulation of carbon partitioning in the leaves of plants. May regulate the synthesis of sucrose and therefore play a major role as a limiting factor in the export of photoassimilates out of the leaf. Plays a role for sucrose availability that is essential for plant growth and fiber elongation. This is Probable sucrose-phosphate synthase 1 (SPS1) from Craterostigma plantagineum (Blue gem).